Consider the following 708-residue polypeptide: Leucine-rich repeat neuronal protein 3 (708 aa).

The signal sequence occupies residues 1–22 (MKDMPLQIHVLLGLAITTLVQA). An LRRNT domain is found at 23–69 (VDKKVDCPQLCTCEIRPWFTPTSIYMEASTVDCNDLGLLTFPARLPA). Over 23–628 (VDKKVDCPQL…KEYEKSNTTT (606 aa)) the chain is Extracellular. LRR repeat units follow at residues 70–91 (NTQI…TDFP), 93–114 (NLTG…NVKK), 117–138 (QLLS…CLSE), 141–162 (NLQE…AFIG), 165–186 (NLLR…WFDA), 189–210 (NLEI…NFKP), 213–234 (NLRS…ALVG), 237–258 (NLES…ALQK), 261–282 (NLKF…DFSN), 285–304 (HLKE…DSLA), 310–332 (DLRK…AFFR), and 335–358 (KLES…ESLP). N-linked (GlcNAc...) asparagine glycans are attached at residues Asn93 and Asn103. N-linked (GlcNAc...) asparagine glycosylation occurs at Asn223. One can recognise an LRRCT domain in the interval 368–421 (NPIRCDCVIRWINMNKTNIRFMEPDSLFCVDPPEFQGQNVRQVHFRDMMEICLP). The N-linked (GlcNAc...) asparagine glycan is linked to Asn382. In terms of domain architecture, Ig-like C2-type spans 421 to 514 (PLIAPESFPS…DLKSVMIKVD (94 aa)). Cys444 and Cys496 are disulfide-bonded. N-linked (GlcNAc...) asparagine glycosylation is found at Asn522, Asn579, Asn608, and Asn625. Residues 523–617 (GSLNIKIRDI…NVTTKGLDPD (95 aa)) enclose the Fibronectin type-III domain. The helical transmembrane segment at 629–649 (LMACLGGLLGIIGVICLISCL) threads the bilayer. Topologically, residues 650–708 (SPEMNCDGGHSYVRNYLQKPTFALGELYPPLINLWEAGKEKSTSLKVKATVIGLPTNMS) are cytoplasmic.

It is found in the membrane. This Pongo abelii (Sumatran orangutan) protein is Leucine-rich repeat neuronal protein 3 (LRRN3).